The primary structure comprises 278 residues: MTFGEKLLNAASTRGRLCVGIDPHESLLTSWGLPVNVDGLAEFSRACVEAFADTVALVKPQVAFYERFGSAGFAILEETIQTLRERGCLVVSDAKRGDIGSTMAGYASAWLDPASPLSSDAVTVSPYLGFHSLDPVFELAEQHGRGVFVLAATSNPEARELQDQQNADGVSISQQIVDQAAALNAPYMAQGKAGNIGVVIGATLSKPPRLSTLGGAILMPGVGAQGGTASDVDEIAGDMAHLAFPNVSRSILATGPDIAEMKNSVAKNAADFPGFPRS.

K95 acts as the Proton donor in catalysis.

It belongs to the OMP decarboxylase family. Type 2 subfamily.

The enzyme catalyses orotidine 5'-phosphate + H(+) = UMP + CO2. The protein operates within pyrimidine metabolism; UMP biosynthesis via de novo pathway; UMP from orotate: step 2/2. The polypeptide is Orotidine 5'-phosphate decarboxylase (Corynebacterium glutamicum (strain ATCC 13032 / DSM 20300 / JCM 1318 / BCRC 11384 / CCUG 27702 / LMG 3730 / NBRC 12168 / NCIMB 10025 / NRRL B-2784 / 534)).